Consider the following 205-residue polypeptide: Non-specific lipid transfer protein GPI-anchored 21 (205 aa).

A signal peptide spans 1–27 (MNSNSFLISAALIFSLLSSNSPTSILA). Disulfide bonds link Cys-33-Cys-75, Cys-44-Cys-59, Cys-60-Cys-100, and Cys-73-Cys-109. Asn-89 carries an N-linked (GlcNAc...) asparagine glycan. A disordered region spans residues 116–182 (LPTPGPASFG…FAPPPPSSSP (67 aa)). The span at 126-156 (PTTSPTDSQTSDPEGSASFRPPTSPTTSQTP) shows a compositional bias: low complexity. Ser-179 is lipidated: GPI-anchor amidated serine. Positions 180–205 (SSPSSSHSLKLSYLLFAFAFTIIKFI) are cleaved as a propeptide — removed in mature form.

The protein belongs to the plant LTP family.

It is found in the cell membrane. Probable lipid transfer protein. In Arabidopsis thaliana (Mouse-ear cress), this protein is Non-specific lipid transfer protein GPI-anchored 21.